Reading from the N-terminus, the 501-residue chain is Ribose import ATP-binding protein RbsA (501 aa).

2 ABC transporter domains span residues 6-242 (LQLS…VGRK) and 253-495 (VHGQ…VGKK). Residue 38–45 (GENGAGKS) coordinates ATP.

It belongs to the ABC transporter superfamily. Ribose importer (TC 3.A.1.2.1) family. As to quaternary structure, the complex is composed of an ATP-binding protein (RbsA), two transmembrane proteins (RbsC) and a solute-binding protein (RbsB).

Its subcellular location is the cell inner membrane. It catalyses the reaction D-ribose(out) + ATP + H2O = D-ribose(in) + ADP + phosphate + H(+). Part of the ABC transporter complex RbsABC involved in ribose import. Responsible for energy coupling to the transport system. The protein is Ribose import ATP-binding protein RbsA of Vibrio vulnificus (strain YJ016).